Here is a 546-residue protein sequence, read N- to C-terminus: Flavin-dependent oxygenase ucdF (546 aa).

In terms of domain architecture, FAD-binding PCMH-type spans 81-263; that stretch reads QGRIPYYAVM…VNTTIRTFPD (183 aa).

Belongs to the oxygen-dependent FAD-linked oxidoreductase family.

Nonribosomal peptide synthetase that mediates the biosynthesis of usterphenyllins and uscandidusins, p-terphenyl derivatives. The function of ucdF within the pathway still remains to be determined. UcdE further prenylates position C-14 of ring C of usterphenyllin B to form usterphenyllin A. The pathway begin with the biosynthesis of 4-hydroxyphenylpyruvate (HPPA) from L-tyrosine, possibly by the aminotransferase ucdG. The nonribosomal peptide synthetase ucdA then condenses two HPPA units to produce atromentin. The key step in this pathway is the reduction and dehydration of atromentin to form a terphenyl triol intermediate, performed by the NAD-dependent dehydrogenase ucdB. Further O-methylation by the methyltransferase ucdC forms terphenyllin carrying two methoxy moieties at C-9 and C-12, and subsequent dihydroxylation at C-3 of ring A and C-15 of ring C by the flavin-dependent oxygenase ucdD leads to 3,15-dihydroxyterphenyllin. Prenylation by ucdE at position C-5 of ring A forms usterphenyllin B, and is followed by a second prenylation at position C-14 of ring C to form usterphenyllin A. The following furan ring formation that leads to uscandidusins A and B was proven to be an unexpected spontaneous non-enzymatic reaction. The protein is Flavin-dependent oxygenase ucdF of Aspergillus ustus.